Reading from the N-terminus, the 464-residue chain is Soluble pyridine nucleotide transhydrogenase (464 aa).

Residue 35–44 (DSRRVVGGNC) coordinates FAD.

This sequence belongs to the class-I pyridine nucleotide-disulfide oxidoreductase family. Requires FAD as cofactor.

It is found in the cytoplasm. The enzyme catalyses NAD(+) + NADPH = NADH + NADP(+). Its function is as follows. Conversion of NADPH, generated by peripheral catabolic pathways, to NADH, which can enter the respiratory chain for energy generation. The protein is Soluble pyridine nucleotide transhydrogenase of Pseudomonas aeruginosa (strain LESB58).